The sequence spans 334 residues: Dual specificity mitogen-activated protein kinase kinase 6 (334 aa).

Over residues 1–11 the composition is skewed to basic residues; that stretch reads MSQSKGKKRNP. Positions 1 to 34 are disordered; the sequence is MSQSKGKKRNPGLKIPKEAFEQPQTSSTPPRDLD. Residues 4–19 form a d domain region; that stretch reads SKGKKRNPGLKIPKEA. The Protein kinase domain maps to 53–314; that stretch reads LEPIVELGRG…YPELMQHPFF (262 aa). ATP is bound by residues 59-67 and Lys82; that span reads LGRGAYGVV. Asp179 acts as the Proton acceptor in catalysis. Ser207 bears the Phosphoserine; by MAPK3 mark. Phosphothreonine; by MAPK3 is present on Thr211. Residues 311-334 form a DVD domain region; the sequence is HPFFTLHESKATDVASFVKSILGD.

It belongs to the protein kinase superfamily. STE Ser/Thr protein kinase family. MAP kinase kinase subfamily. Dimer. Interacts (via its D domain) with its substrates MAPK11, MAPK12, MAPK13 and MAPK14. Interacts (via its DVD domain) with MAP3Ks activators like MAP3K5/ASK1, MAP3K1/MEKK1, MAP3K2/MEKK2, MAP3K3/MEKK3, MAP3K4/MEKK4, MAP3K7/TAK1, MAP3K11/MLK3 and MAP3K17/TAOK2. Interacts with DCTN1. Interacts with EIF2AK2/PKR. Weakly autophosphorylated. Phosphorylated at Ser-207 and Thr-211 by the majority of M3Ks, such as MAP3K5/ASK1, MAP3K1/MEKK1, MAP3K2/MEKK2, MAP3K3/MEKK3, MAP3K4/MEKK4, MAP3K7/TAK1, MAP3K11/MLK3 and MAP3K17/TAOK2. Post-translationally, in response to genotoxic stress, MAP3K-phosphorylated MAP2K6 is ubiquitinated and degraded by the SCF(FBXO31) complex.

The protein localises to the nucleus. It localises to the cytoplasm. Its subcellular location is the cytoskeleton. It catalyses the reaction L-seryl-[protein] + ATP = O-phospho-L-seryl-[protein] + ADP + H(+). The catalysed reaction is L-threonyl-[protein] + ATP = O-phospho-L-threonyl-[protein] + ADP + H(+). The enzyme catalyses L-tyrosyl-[protein] + ATP = O-phospho-L-tyrosyl-[protein] + ADP + H(+). Activated by dual phosphorylation on Ser-207 and Thr-211 in response to a variety of cellular stresses, including UV radiation, osmotic shock, hypoxia, inflammatory cytokines, interferon gamma (IFNG), and less often by growth factors. MAP2K6/MKK6 is activated by the majority of M3Ks, such as MAP3K5/ASK1, MAP3K1/MEKK1, MAP3K2/MEKK2, MAP3K3/MEKK3, MAP3K4/MEKK4, MAP3K7/TAK1, MAP3K11/MLK3 and MAP3K17/TAOK2. Functionally, dual specificity protein kinase which acts as an essential component of the MAP kinase signal transduction pathway. With MAP3K3/MKK3, catalyzes the concomitant phosphorylation of a threonine and a tyrosine residue in the MAP kinases p38 MAPK11, MAPK12, MAPK13 and MAPK14 and plays an important role in the regulation of cellular responses to cytokines and all kinds of stresses. Especially, MAP2K3/MKK3 and MAP2K6/MKK6 are both essential for the activation of MAPK11 and MAPK13 induced by environmental stress, whereas MAP2K6/MKK6 is the major MAPK11 activator in response to TNF. MAP2K6/MKK6 also phosphorylates and activates PAK6. The p38 MAP kinase signal transduction pathway leads to direct activation of transcription factors. Nuclear targets of p38 MAP kinase include the transcription factors ATF2 and ELK1. Within the p38 MAPK signal transduction pathway, MAP3K6/MKK6 mediates phosphorylation of STAT4 through MAPK14 activation, and is therefore required for STAT4 activation and STAT4-regulated gene expression in response to IL-12 stimulation. The pathway is also crucial for IL-6-induced SOCS3 expression and down-regulation of IL-6-mediated gene induction; and for IFNG-dependent gene transcription. Has a role in osteoclast differentiation through NF-kappa-B transactivation by TNFSF11, and in endochondral ossification and since SOX9 is another likely downstream target of the p38 MAPK pathway. MAP2K6/MKK6 mediates apoptotic cell death in thymocytes. Acts also as a regulator for melanocytes dendricity, through the modulation of Rho family GTPases. This chain is Dual specificity mitogen-activated protein kinase kinase 6 (MAP2K6), found in Bos taurus (Bovine).